The chain runs to 100 residues: Cysteine-rich venom protein VAR1 (100 aa).

Residues 1–22 (MILLKLYLTLAAILCQSRGTTS) form the signal peptide. One can recognise an SCP domain in the interval 41–81 (NKHNDLRRTVDPPAKNMLKMSWDNIIAESAKRAALRCNQNE).

The protein belongs to the CRISP family. Post-translationally, contains 8 disulfide bonds. In terms of tissue distribution, expressed by the venom gland.

The protein resides in the secreted. In terms of biological role, blocks ryanodine receptors, and potassium channels. The protein is Cysteine-rich venom protein VAR1 of Varanus acanthurus (Ridge-tailed monitor).